Here is a 276-residue protein sequence, read N- to C-terminus: Phospholipid phosphatase 2 (276 aa).

Topologically, residues 1–4 are cytoplasmic; that stretch reads MERR. The chain crosses the membrane as a helical span at residues 5 to 25; that stretch reads WVFVLLDVLCVLVASLPFIIL. At 26-51 the chain is on the lumenal side; sequence TLVNAPYKRGFYCGDDSIRYPYRPDT. A helical membrane pass occupies residues 52-72; the sequence is ITHGLMAGVIITATVVLVSSG. The Cytoplasmic segment spans residues 73–87; sequence EAYLVYTDRLYSRSD. Residues 88-108 form a helical membrane-spanning segment; it reads FNNYVAAIYKVLGTFLFGAAV. Residues 109–161 lie on the Lumenal side of the membrane; sequence SQSLTDLAKYMIGRLRPSFLAVCDPDWSRVNCSGYVQVEVCRGSPANVTEARL. Positions 117–125 are phosphatase sequence motif I; it reads KYMIGRLRP. N-linked (GlcNAc...) asparagine glycans are attached at residues N139 and N155. The chain crosses the membrane as a helical span at residues 162 to 182; the sequence is SFYSGHSSFGMYCMLFLALYV. Residues 164 to 167 are phosphatase sequence motif II; it reads YSGH. H167 serves as the catalytic Proton donors. Residues 183-189 are Cytoplasmic-facing; it reads QARLCWK. Residues 190 to 210 form a helical membrane-spanning segment; it reads WARLLRPTVQFFLVAFAIYVG. Over 211–225 the chain is Lumenal; sequence YTRVSDNKHHWSDVL. The segment at 212 to 223 is phosphatase sequence motif III; it reads TRVSDNKHHWSD. Catalysis depends on H219, which acts as the Nucleophile. The chain crosses the membrane as a helical span at residues 226–246; the sequence is VGLLQGALVACLTVCYVSDFF. Over 247–276 the chain is Cytoplasmic; that stretch reads KSRPPQSCQENEESERKPSLSLTLTLGDRP. The disordered stretch occupies residues 252–276; sequence QSCQENEESERKPSLSLTLTLGDRP.

The protein belongs to the PA-phosphatase related phosphoesterase family. As to quaternary structure, forms functional homodimers and homooligomers. Can also form heterooligomers with PLPP1 and PLPP3. In terms of processing, N-glycosylated. As to expression, expressed in the brain.

It localises to the membrane. It is found in the cell membrane. The protein localises to the early endosome membrane. The protein resides in the endoplasmic reticulum membrane. The catalysed reaction is a 1,2-diacyl-sn-glycero-3-phosphate + H2O = a 1,2-diacyl-sn-glycerol + phosphate. It catalyses the reaction 1,2-dihexadecanoyl-sn-glycero-3-phosphate + H2O = 1,2-dihexadecanoyl-sn-glycerol + phosphate. The enzyme catalyses 1,2-di-(9Z-octadecenoyl)-sn-glycero-3-phosphate + H2O = 1,2-di-(9Z-octadecenoyl)-sn-glycerol + phosphate. It carries out the reaction a monoacyl-sn-glycero-3-phosphate + H2O = a monoacylglycerol + phosphate. The catalysed reaction is (9Z)-octadecenoyl-sn-glycero-3-phosphate + H2O = (9Z-octadecenoyl)-glycerol + phosphate. It catalyses the reaction sphing-4-enine 1-phosphate + H2O = sphing-4-enine + phosphate. The enzyme catalyses an N-acylsphing-4-enine 1-phosphate + H2O = an N-acylsphing-4-enine + phosphate. It carries out the reaction N-(octanoyl)-sphing-4-enine-1-phosphate + H2O = N-octanoylsphing-4-enine + phosphate. The catalysed reaction is N-(9Z-octadecenoyl)-ethanolamine phosphate + H2O = N-(9Z-octadecenoyl) ethanolamine + phosphate. It functions in the pathway lipid metabolism; phospholipid metabolism. With respect to regulation, magnesium-independent phospholipid phosphatase. Insensitive to N-ethylmaleimide. Its function is as follows. Magnesium-independent phospholipid phosphatase that catalyzes the dephosphorylation of a variety of glycerolipid and sphingolipid phosphate esters including phosphatidate/PA, lysophosphatidate/LPA, sphingosine 1-phosphate/S1P and ceramide 1-phosphate/C1P. Has no apparent extracellular phosphatase activity and therefore most probably acts intracellularly. Also acts on N-oleoyl ethanolamine phosphate/N-(9Z-octadecenoyl)-ethanolamine phosphate, a potential physiological compound. Through dephosphorylation of these bioactive lipid mediators produces new bioactive compounds and may regulate signal transduction in different cellular processes. Indirectly regulates, for instance, cell cycle G1/S phase transition through its phospholipid phosphatase activity. The chain is Phospholipid phosphatase 2 from Rattus norvegicus (Rat).